Consider the following 198-residue polypeptide: dITP/XTP pyrophosphatase (198 aa).

Position 7-12 (7-12 (THNPHK)) interacts with substrate. The Mg(2+) site is built by Glu-40 and Asp-69. Asp-69 acts as the Proton acceptor in catalysis. Substrate-binding positions include Thr-70, 151–154 (FGYD), Lys-174, and 179–180 (HR).

Belongs to the HAM1 NTPase family. As to quaternary structure, homodimer. Requires Mg(2+) as cofactor.

It carries out the reaction XTP + H2O = XMP + diphosphate + H(+). The enzyme catalyses dITP + H2O = dIMP + diphosphate + H(+). The catalysed reaction is ITP + H2O = IMP + diphosphate + H(+). In terms of biological role, pyrophosphatase that catalyzes the hydrolysis of nucleoside triphosphates to their monophosphate derivatives, with a high preference for the non-canonical purine nucleotides XTP (xanthosine triphosphate), dITP (deoxyinosine triphosphate) and ITP. Seems to function as a house-cleaning enzyme that removes non-canonical purine nucleotides from the nucleotide pool, thus preventing their incorporation into DNA/RNA and avoiding chromosomal lesions. This Thermoanaerobacter pseudethanolicus (strain ATCC 33223 / 39E) (Clostridium thermohydrosulfuricum) protein is dITP/XTP pyrophosphatase.